The chain runs to 180 residues: Pyruvoyl-dependent arginine decarboxylase (180 aa).

Ser-41 bears the Pyruvic acid (Ser) mark.

The protein belongs to the PdaD family. The cofactor is pyruvate.

It carries out the reaction L-arginine + H(+) = agmatine + CO2. In Methanococcoides burtonii (strain DSM 6242 / NBRC 107633 / OCM 468 / ACE-M), this protein is Pyruvoyl-dependent arginine decarboxylase.